The following is a 521-amino-acid chain: Bifunctional dihydrofolate reductase-thymidylate synthase (521 aa).

The 211-residue stretch at 22–232 folds into the DHFR domain; sequence AFSLVVAVDE…TKYYFEKLIP (211 aa). V26 is a substrate binding site. NADP(+)-binding positions include A28 and 34–40; that span reads GIGDGRS. Residue D48 participates in substrate binding. NADP(+) contacts are provided by residues 78–80 and 99–102; these read RKT and LSST. The substrate site is built by I154, Y160, and T178. An NADP(+)-binding site is contributed by 155–162; it reads GGGSVYAE. The segment at 237-521 is thymidylate synthase; that stretch reads EEQYLSLVDR…YPPISMKMAV (285 aa). R257 is a binding site for dUMP. C403 is an active-site residue. Residues H404, 422-426, N434, and 464-466 contribute to the dUMP site; these read QRSCD and HVY.

It in the N-terminal section; belongs to the dihydrofolate reductase family. This sequence in the C-terminal section; belongs to the thymidylate synthase family. As to quaternary structure, homodimer.

It carries out the reaction (6S)-5,6,7,8-tetrahydrofolate + NADP(+) = 7,8-dihydrofolate + NADPH + H(+). The enzyme catalyses dUMP + (6R)-5,10-methylene-5,6,7,8-tetrahydrofolate = 7,8-dihydrofolate + dTMP. The protein operates within cofactor biosynthesis; tetrahydrofolate biosynthesis; 5,6,7,8-tetrahydrofolate from 7,8-dihydrofolate: step 1/1. Bifunctional enzyme. Involved in de novo dTMP biosynthesis. Key enzyme in folate metabolism. Catalyzes an essential reaction for de novo glycine and purine synthesis, DNA precursor synthesis, and for the conversion of dUMP to dTMP. The chain is Bifunctional dihydrofolate reductase-thymidylate synthase from Trypanosoma cruzi.